We begin with the raw amino-acid sequence, 408 residues long: Heparan-sulfate 6-O-sulfotransferase 1 (408 aa).

At 8–14 the chain is on the cytoplasmic side; the sequence is MVERTSK. The chain crosses the membrane as a helical; Signal-anchor for type II membrane protein span at residues 15-35; it reads FLLIVAASVCFMLILYQYVGP. Topologically, residues 36 to 408 are lumenal; it reads GLSLGAPSGR…DYMSHIIEKW (373 aa). Position 90 to 98 (90 to 98) interacts with 3'-phosphoadenylyl sulfate; the sequence is HIQKTGGTT. Substrate is bound by residues 120 to 121, arginine 137, tryptophan 142, and histidine 147; that span reads KK. Residue histidine 147 is the Proton acceptor of the active site. Arginine 182 and serine 190 together coordinate 3'-phosphoadenylyl sulfate. Substrate-binding residues include histidine 194 and tryptophan 201. N-linked (GlcNAc...) asparagine glycosylation is present at asparagine 261. 314–316 lines the 3'-phosphoadenylyl sulfate pocket; it reads MQY. Residue asparagine 317 is glycosylated (N-linked (GlcNAc...) asparagine). Position 320-321 (320-321) interacts with 3'-phosphoadenylyl sulfate; it reads RA. Residue asparagine 328 is glycosylated (N-linked (GlcNAc...) asparagine). Positions 348 to 382 form a coiled coil; that stretch reads AKDLFQQRYQYKRQLERMEQRIKNREERLLHRSNE. The segment at 376 to 396 is disordered; the sequence is LLHRSNEALPKEETEEQGRLP.

Belongs to the sulfotransferase 6 family. N-glycosylated.

The protein localises to the membrane. The catalysed reaction is alpha-D-glucosaminyl-[heparan sulfate](n) + 3'-phosphoadenylyl sulfate = 6-sulfo-alpha-D-glucosaminyl-[heparan sulfate](n) + adenosine 3',5'-bisphosphate + H(+). Its function is as follows. 6-O-sulfation enzyme which catalyzes the transfer of sulfate from 3'-phosphoadenosine 5'-phosphosulfate (PAPS) to position 6 of the N-sulfoglucosamine residue (GlcNS) of heparan sulfate. May also play a role in limb development. The protein is Heparan-sulfate 6-O-sulfotransferase 1 of Gallus gallus (Chicken).